Consider the following 217-residue polypeptide: MAARCVRLARGSLPAFALSLRSSPRLLCTAAKQKNNGQNLEEDAGQNEQKTDLPSTEKTLMEEKVKLEEQLKETMEKYKRALADTENLRQRSQKLVEEAKLYGIQGFCKDLLEVADILEKATQCVPQEEIRDDNPHLKSLYEGLVMTEVQIQKVFTKHGLLRLNPLGAKFDPYEHEALFHTPVEGKEPGTVALVNKVGYKLHGRTLRPALVGVVKGA.

The transit peptide at 1-27 (MAARCVRLARGSLPAFALSLRSSPRLL) directs the protein to the mitochondrion. Residue K94 is modified to N6-acetyllysine; alternate. K94 is subject to N6-succinyllysine; alternate. K100 carries the post-translational modification N6-acetyllysine. Position 120 is an N6-succinyllysine (K120). K215 bears the N6-acetyllysine; alternate mark. At K215 the chain carries N6-succinyllysine; alternate.

This sequence belongs to the GrpE family. Probable component of the PAM complex at least composed of a mitochondrial HSP70 protein, GRPEL1 or GRPEL2, TIMM44, TIMM16/PAM16 and TIMM14/DNAJC19. Binds to HSP70, HSC70 and HSJ1B.

It is found in the mitochondrion matrix. Its function is as follows. Essential component of the PAM complex, a complex required for the translocation of transit peptide-containing proteins from the inner membrane into the mitochondrial matrix in an ATP-dependent manner. Seems to control the nucleotide-dependent binding of mitochondrial HSP70 to substrate proteins. The sequence is that of GrpE protein homolog 1, mitochondrial (GRPEL1) from Bos taurus (Bovine).